Consider the following 423-residue polypeptide: Serine hydroxymethyltransferase (423 aa).

(6S)-5,6,7,8-tetrahydrofolate contacts are provided by residues L120 and 124 to 126 (GHL). K229 is subject to N6-(pyridoxal phosphate)lysine. 353–355 (SPF) is a binding site for (6S)-5,6,7,8-tetrahydrofolate.

This sequence belongs to the SHMT family. Homodimer. It depends on pyridoxal 5'-phosphate as a cofactor.

Its subcellular location is the cytoplasm. It carries out the reaction (6R)-5,10-methylene-5,6,7,8-tetrahydrofolate + glycine + H2O = (6S)-5,6,7,8-tetrahydrofolate + L-serine. It participates in one-carbon metabolism; tetrahydrofolate interconversion. Its pathway is amino-acid biosynthesis; glycine biosynthesis; glycine from L-serine: step 1/1. Catalyzes the reversible interconversion of serine and glycine with tetrahydrofolate (THF) serving as the one-carbon carrier. This reaction serves as the major source of one-carbon groups required for the biosynthesis of purines, thymidylate, methionine, and other important biomolecules. Also exhibits THF-independent aldolase activity toward beta-hydroxyamino acids, producing glycine and aldehydes, via a retro-aldol mechanism. The polypeptide is Serine hydroxymethyltransferase (Prochlorococcus marinus (strain MIT 9515)).